The sequence spans 95 residues: Aspartyl/glutamyl-tRNA(Asn/Gln) amidotransferase subunit C (95 aa).

The protein belongs to the GatC family. Heterotrimer of A, B and C subunits.

It carries out the reaction L-glutamyl-tRNA(Gln) + L-glutamine + ATP + H2O = L-glutaminyl-tRNA(Gln) + L-glutamate + ADP + phosphate + H(+). It catalyses the reaction L-aspartyl-tRNA(Asn) + L-glutamine + ATP + H2O = L-asparaginyl-tRNA(Asn) + L-glutamate + ADP + phosphate + 2 H(+). Allows the formation of correctly charged Asn-tRNA(Asn) or Gln-tRNA(Gln) through the transamidation of misacylated Asp-tRNA(Asn) or Glu-tRNA(Gln) in organisms which lack either or both of asparaginyl-tRNA or glutaminyl-tRNA synthetases. The reaction takes place in the presence of glutamine and ATP through an activated phospho-Asp-tRNA(Asn) or phospho-Glu-tRNA(Gln). This chain is Aspartyl/glutamyl-tRNA(Asn/Gln) amidotransferase subunit C, found in Maricaulis maris (strain MCS10) (Caulobacter maris).